The primary structure comprises 135 residues: ATP synthase epsilon chain (135 aa).

The protein belongs to the ATPase epsilon chain family. In terms of assembly, F-type ATPases have 2 components, CF(1) - the catalytic core - and CF(0) - the membrane proton channel. CF(1) has five subunits: alpha(3), beta(3), gamma(1), delta(1), epsilon(1). CF(0) has three main subunits: a, b and c.

It localises to the cell inner membrane. Functionally, produces ATP from ADP in the presence of a proton gradient across the membrane. The protein is ATP synthase epsilon chain of Brucella abortus (strain S19).